Here is an 82-residue protein sequence, read N- to C-terminus: MLLSILLQVATGTGLAKLGEALGAGLAVIGAGLGIGKIGESAMEGIARQPEAAGDIRMNMIIAAALVEGVSLFAVVVCGFLL.

2 helical membrane-spanning segments follow: residues 18-38 (LGEALGAGLAVIGAGLGIGKI) and 61-81 (IIAAALVEGVSLFAVVVCGFL).

The protein belongs to the ATPase C chain family. F-type ATPases have 2 components, F(1) - the catalytic core - and F(0) - the membrane proton channel. F(1) has five subunits: alpha(3), beta(3), gamma(1), delta(1), epsilon(1). F(0) has three main subunits: a(1), b(2) and c(10-14). The alpha and beta chains form an alternating ring which encloses part of the gamma chain. F(1) is attached to F(0) by a central stalk formed by the gamma and epsilon chains, while a peripheral stalk is formed by the delta and b chains.

The protein resides in the cell inner membrane. F(1)F(0) ATP synthase produces ATP from ADP in the presence of a proton or sodium gradient. F-type ATPases consist of two structural domains, F(1) containing the extramembraneous catalytic core and F(0) containing the membrane proton channel, linked together by a central stalk and a peripheral stalk. During catalysis, ATP synthesis in the catalytic domain of F(1) is coupled via a rotary mechanism of the central stalk subunits to proton translocation. Its function is as follows. Key component of the F(0) channel; it plays a direct role in translocation across the membrane. A homomeric c-ring of between 10-14 subunits forms the central stalk rotor element with the F(1) delta and epsilon subunits. This Azobacteroides pseudotrichonymphae genomovar. CFP2 protein is ATP synthase subunit c.